We begin with the raw amino-acid sequence, 535 residues long: Succinate-semialdehyde dehydrogenase, mitochondrial (535 aa).

Residues 1-47 constitute a mitochondrion transit peptide; that stretch reads MATCIWLRSCGARRLGSTFPGCRLRPRAGGLVPASGPAPGPAQLRCY. Lysine 126 carries the N6-acetyllysine; alternate modification. N6-succinyllysine; alternate is present on lysine 126. Lysine 135 and lysine 184 each carry N6-succinyllysine. 202 to 204 is an NAD(+) binding site; the sequence is TPW. Arginine 213 lines the substrate pocket. Residue 228 to 231 participates in NAD(+) binding; that stretch reads KPAE. Position 265 is an N6-acetyllysine; alternate (lysine 265). The residue at position 265 (lysine 265) is an N6-succinyllysine; alternate. NAD(+) contacts are provided by residues 284 to 289 and glutamate 306; that span reads GSTTTG. Residue glutamate 306 is the Proton acceptor of the active site. Substrate is bound at residue arginine 334. The Nucleophile role is filled by cysteine 340. An intrachain disulfide couples cysteine 340 to cysteine 342. Lysine 365 is subject to N6-acetyllysine. Lysine 402 bears the N6-succinyllysine mark. The residue at position 411 (lysine 411) is an N6-acetyllysine. 438-440 contacts NAD(+); that stretch reads ETF. Serine 498 provides a ligand contact to substrate. Serine 499 is modified (phosphoserine).

It belongs to the aldehyde dehydrogenase family. As to quaternary structure, homotetramer. Brain, pancreas, heart, liver, skeletal muscle and kidney. Lower in placenta.

The protein localises to the mitochondrion. It catalyses the reaction succinate semialdehyde + NAD(+) + H2O = succinate + NADH + 2 H(+). It functions in the pathway amino-acid degradation; 4-aminobutanoate degradation. Its activity is regulated as follows. Redox-regulated. Inhibited under oxydizing conditions. Inhibited by hydrogen peroxide H(2)O(2). In terms of biological role, catalyzes one step in the degradation of the inhibitory neurotransmitter gamma-aminobutyric acid (GABA). This Homo sapiens (Human) protein is Succinate-semialdehyde dehydrogenase, mitochondrial.